Consider the following 506-residue polypeptide: Photosystem II CP47 reaction center protein (506 aa).

6 helical membrane passes run S21–S36, I101–W115, G140–F156, I203–S218, V237–V252, and S457–R472.

This sequence belongs to the PsbB/PsbC family. PsbB subfamily. As to quaternary structure, PSII is composed of 1 copy each of membrane proteins PsbA, PsbB, PsbC, PsbD, PsbE, PsbF, PsbH, PsbI, PsbJ, PsbK, PsbL, PsbM, PsbT, PsbX, PsbY, PsbZ, Psb30/Ycf12, at least 3 peripheral proteins of the oxygen-evolving complex and a large number of cofactors. It forms dimeric complexes. The cofactor is Binds multiple chlorophylls. PSII binds additional chlorophylls, carotenoids and specific lipids..

It is found in the plastid. Its subcellular location is the chloroplast thylakoid membrane. In terms of biological role, one of the components of the core complex of photosystem II (PSII). It binds chlorophyll and helps catalyze the primary light-induced photochemical processes of PSII. PSII is a light-driven water:plastoquinone oxidoreductase, using light energy to abstract electrons from H(2)O, generating O(2) and a proton gradient subsequently used for ATP formation. This chain is Photosystem II CP47 reaction center protein, found in Cucumis sativus (Cucumber).